The chain runs to 413 residues: MKSQLSLKDPKIFELIEQEKKRQKENIILIASENFVSKEVLETQGSILTNKYAEGYPGKRYYHGCGNVDDIEQIAIERAKKLFNARYANVQPHSGSQANMAVLQALLQPNDKILSLSLNDGGHLTHGHKLSFSGKYYQSYSYNVDPTTEMLDYESIRKLALEIKPKLIIAGYSAYSRKINFQKFREIANEVNAYLMADIAHIAGFVACKLHPCPLEAQADIVTSTTHKTLRGPRGGLILTNKEKIMQQINRSVFPGIQGGPLMHVIAAKAVSFKEAQSLEFKNYQQQVIKNAQAFAQTFQKKGYHVVSQGTDNHLFLINLKKTNPLFTGEKIANILEKVNIIVNKNTIPFDQEKPMFTSGIRLGTPAMTTKGFQEADFIKLADLIDQAIKNRDDNVYLQKIKKEVLDWTNDFK.

Residues Leu-118 and 122–124 (GHL) each bind (6S)-5,6,7,8-tetrahydrofolate. Lys-228 is modified (N6-(pyridoxal phosphate)lysine).

The protein belongs to the SHMT family. As to quaternary structure, homodimer. Pyridoxal 5'-phosphate is required as a cofactor.

Its subcellular location is the cytoplasm. The enzyme catalyses (6R)-5,10-methylene-5,6,7,8-tetrahydrofolate + glycine + H2O = (6S)-5,6,7,8-tetrahydrofolate + L-serine. It functions in the pathway one-carbon metabolism; tetrahydrofolate interconversion. Its pathway is amino-acid biosynthesis; glycine biosynthesis; glycine from L-serine: step 1/1. In terms of biological role, catalyzes the reversible interconversion of serine and glycine with tetrahydrofolate (THF) serving as the one-carbon carrier. This reaction serves as the major source of one-carbon groups required for the biosynthesis of purines, thymidylate, methionine, and other important biomolecules. Also exhibits THF-independent aldolase activity toward beta-hydroxyamino acids, producing glycine and aldehydes, via a retro-aldol mechanism. The polypeptide is Serine hydroxymethyltransferase (Phytoplasma australiense).